Reading from the N-terminus, the 212-residue chain is Thymidylate kinase (212 aa).

11-18 lines the ATP pocket; sequence GPEGAGKS.

Belongs to the thymidylate kinase family.

It carries out the reaction dTMP + ATP = dTDP + ADP. Phosphorylation of dTMP to form dTDP in both de novo and salvage pathways of dTTP synthesis. The polypeptide is Thymidylate kinase (Streptococcus sanguinis (strain SK36)).